Consider the following 60-residue polypeptide: MTKEAKVKVQLVRSPIGTKESHRATVRGLGLRGVNSVSELQDTPAVRGMINKISYLVKVI.

Belongs to the universal ribosomal protein uL30 family. In terms of assembly, part of the 50S ribosomal subunit.

The polypeptide is Large ribosomal subunit protein uL30 (Polaromonas sp. (strain JS666 / ATCC BAA-500)).